The primary structure comprises 353 residues: Photosystem II D2 protein (353 aa).

N-acetylthreonine is present on T2. The residue at position 2 (T2) is a Phosphothreonine. The chain crosses the membrane as a helical span at residues 41-61 (CAYFALGGWFTGTTFVTSWYT). H118 is a chlorophyll a binding site. The helical transmembrane segment at 125–141 (GFMLRQFELARPVQLRP) threads the bilayer. Pheophytin a contacts are provided by Q130 and N143. The chain crosses the membrane as a helical span at residues 153–166 (VFLSVFLIYPLGQS). Residue H198 participates in chlorophyll a binding. Residues 208–228 (AVLLCAIHGATVENTLFEDGD) traverse the membrane as a helical segment. H215 and F262 together coordinate a plastoquinone. H215 is a Fe cation binding site. Position 269 (H269) interacts with Fe cation. A helical membrane pass occupies residues 279–295 (GLWMSAIGVVGLALNLR).

This sequence belongs to the reaction center PufL/M/PsbA/D family. PSII is composed of 1 copy each of membrane proteins PsbA, PsbB, PsbC, PsbD, PsbE, PsbF, PsbH, PsbI, PsbJ, PsbK, PsbL, PsbM, PsbT, PsbX, PsbY, PsbZ, Psb30/Ycf12, at least 3 peripheral proteins of the oxygen-evolving complex and a large number of cofactors. It forms dimeric complexes. The D1/D2 heterodimer binds P680, chlorophylls that are the primary electron donor of PSII, and subsequent electron acceptors. It shares a non-heme iron and each subunit binds pheophytin, quinone, additional chlorophylls, carotenoids and lipids. There is also a Cl(-1) ion associated with D1 and D2, which is required for oxygen evolution. The PSII complex binds additional chlorophylls, carotenoids and specific lipids. serves as cofactor. Only phosphorylated in mesophyll cells, phosphorylation increases when cells are grown under high rather than low light regimes (70 vs 900 umol photons/m-2/s).

The protein resides in the plastid. The protein localises to the chloroplast thylakoid membrane. It catalyses the reaction 2 a plastoquinone + 4 hnu + 2 H2O = 2 a plastoquinol + O2. In terms of biological role, photosystem II (PSII) is a light-driven water:plastoquinone oxidoreductase that uses light energy to abstract electrons from H(2)O, generating O(2) and a proton gradient subsequently used for ATP formation. It consists of a core antenna complex that captures photons, and an electron transfer chain that converts photonic excitation into a charge separation. The D1/D2 (PsbA/PsbD) reaction center heterodimer binds P680, the primary electron donor of PSII as well as several subsequent electron acceptors. D2 is needed for assembly of a stable PSII complex. This Zea mays (Maize) protein is Photosystem II D2 protein.